Consider the following 360-residue polypeptide: Popeye domain-containing protein 1 (360 aa).

At 1–48 (MNYTESSPLRESTAIGFTPELESIIPVPSNKTTCENWREIHHLVFHVA) the chain is on the extracellular side. N-linked (GlcNAc...) asparagine glycans are attached at residues Asn-2 and Asn-30. A helical membrane pass occupies residues 49–69 (NICFAVGLVIPTTLHLHMIFL). A topological domain (cytoplasmic) is located at residue Arg-70. A helical membrane pass occupies residues 71–91 (GMLTLGCTLYIVWATLYRCAL). Residue Asp-92 is a topological domain, extracellular. A helical membrane pass occupies residues 93-113 (IMIWNSVFLGVNILHLSYLLY). The segment at 93–115 (IMIWNSVFLGVNILHLSYLLYKK) is required for interaction with CAV3. At 114–360 (KKRPVKIEKE…PNTLKVHQLP (247 aa)) the chain is on the cytoplasmic side. Positions 136–186 (RVPPDLFRRLTGQFCMIQTLKKGQTYAAEDKTSVDDRLSILLKGKMKVSYR) are required for interaction with KCNK2. Phosphoserine occurs at positions 295 and 318. The disordered stretch occupies residues 317-360 (SSLHVSSPHQRASAKMKPIEEGAEDDDDVFEPASPNTLKVHQLP). The span at 337–346 (EGAEDDDDVF) shows a compositional bias: acidic residues. The span at 350-360 (SPNTLKVHQLP) shows a compositional bias: polar residues.

The protein belongs to the popeye family. As to quaternary structure, homodimer. Homodimerization requires the C-terminus cytoplasmic region. Interacts (via the C-terminus cytoplasmic tail) with TJP1. Interacts (via the C-terminus cytoplasmic tail) with ARHGEF25/GEFT (via the DH domain). Interacts (via the C-terminus cytoplasmic tail) with VAMP3. Interacts with KCNK2; the interaction enhances KCNK2 surface expression and is inhibited by cAMP. Interacts with CAV3. In terms of tissue distribution, expressed in epithelial cells (at protein level). Expressed in fetal and adult heart and skeletal muscle.

Its subcellular location is the lateral cell membrane. The protein resides in the cell junction. The protein localises to the tight junction. It localises to the membrane. It is found in the cell membrane. Its subcellular location is the sarcolemma. The protein resides in the caveola. Functionally, cell adhesion molecule involved in the establishment and/or maintenance of cell integrity. Involved in the formation and regulation of the tight junction (TJ) paracellular permeability barrier in epithelial cells. Plays a role in VAMP3-mediated vesicular transport and recycling of different receptor molecules through its interaction with VAMP3. Plays a role in the regulation of cell shape and movement by modulating the Rho-family GTPase activity through its interaction with ARHGEF25/GEFT. Induces primordial adhesive contact and aggregation of epithelial cells in a Ca(2+)-independent manner. Also involved in striated muscle regeneration and repair and in the regulation of cell spreading. Important for the maintenance of cardiac function. Plays a regulatory function in heart rate dynamics mediated, at least in part, through cAMP-binding and, probably, by increasing cell surface expression of the potassium channel KCNK2 and enhancing current density. Is also a caveolae-associated protein important for the preservation of caveolae structural and functional integrity as well as for heart protection against ischemia injury. In Homo sapiens (Human), this protein is Popeye domain-containing protein 1.